Consider the following 415-residue polypeptide: Multidrug resistance protein MdtA (415 aa).

A signal peptide spans 1 to 21 (MKGSYKSRWVIVIVVVIAAIA). Polar residues predominate over residues 31–46 (DSQSAAPGATKQAQQS). Disordered regions lie at residues 31-56 (DSQS…GMRA) and 392-415 (EAQS…GARS). Positions 399–415 (PEEKATSREYAKKGARS) are enriched in basic and acidic residues.

This sequence belongs to the membrane fusion protein (MFP) (TC 8.A.1) family. As to quaternary structure, part of a tripartite efflux system composed of MdtA, MdtB and MdtC.

The protein localises to the cell inner membrane. Functionally, the MdtABC tripartite complex confers resistance against novobiocin and deoxycholate. The chain is Multidrug resistance protein MdtA from Escherichia coli O6:K15:H31 (strain 536 / UPEC).